A 217-amino-acid chain; its full sequence is LexA repressor (217 aa).

Residues Arg-28–Arg-48 constitute a DNA-binding region (H-T-H motif). Catalysis depends on for autocatalytic cleavage activity residues Ser-136 and Lys-173.

The protein belongs to the peptidase S24 family. In terms of assembly, homodimer.

It carries out the reaction Hydrolysis of Ala-|-Gly bond in repressor LexA.. In terms of biological role, represses a number of genes involved in the response to DNA damage (SOS response), including recA and lexA. In the presence of single-stranded DNA, RecA interacts with LexA causing an autocatalytic cleavage which disrupts the DNA-binding part of LexA, leading to derepression of the SOS regulon and eventually DNA repair. This chain is LexA repressor, found in Cupriavidus necator (strain ATCC 17699 / DSM 428 / KCTC 22496 / NCIMB 10442 / H16 / Stanier 337) (Ralstonia eutropha).